We begin with the raw amino-acid sequence, 234 residues long: Large ribosomal subunit protein uL3 (234 aa).

Residues 137–156 (AGHGVERKHRSPGSVGGCAT) form a disordered region.

Belongs to the universal ribosomal protein uL3 family. In terms of assembly, part of the 50S ribosomal subunit. Forms a cluster with proteins L14 and L19.

Its function is as follows. One of the primary rRNA binding proteins, it binds directly near the 3'-end of the 23S rRNA, where it nucleates assembly of the 50S subunit. This Frankia alni (strain DSM 45986 / CECT 9034 / ACN14a) protein is Large ribosomal subunit protein uL3.